A 156-amino-acid chain; its full sequence is Ribosome maturation factor RimP (156 aa).

This sequence belongs to the RimP family.

It localises to the cytoplasm. Its function is as follows. Required for maturation of 30S ribosomal subunits. The protein is Ribosome maturation factor RimP of Synechococcus sp. (strain JA-2-3B'a(2-13)) (Cyanobacteria bacterium Yellowstone B-Prime).